The sequence spans 429 residues: Adenylosuccinate synthetase (429 aa).

GTP contacts are provided by residues 12–18 (GDEGKGK) and 40–42 (GHT). Asp13 functions as the Proton acceptor in the catalytic mechanism. Mg(2+) contacts are provided by Asp13 and Gly40. IMP is bound by residues 13–16 (DEGK), 38–41 (NAGH), Thr128, Arg142, Gln223, Thr238, and Arg302. His41 (proton donor) is an active-site residue. 298–304 (VNTGRKR) serves as a coordination point for substrate. GTP-binding positions include Arg304, 330 to 332 (KLD), and 412 to 414 (GVG).

The protein belongs to the adenylosuccinate synthetase family. Homodimer. Requires Mg(2+) as cofactor.

It is found in the cytoplasm. It carries out the reaction IMP + L-aspartate + GTP = N(6)-(1,2-dicarboxyethyl)-AMP + GDP + phosphate + 2 H(+). It participates in purine metabolism; AMP biosynthesis via de novo pathway; AMP from IMP: step 1/2. Functionally, plays an important role in the de novo pathway of purine nucleotide biosynthesis. Catalyzes the first committed step in the biosynthesis of AMP from IMP. The polypeptide is Adenylosuccinate synthetase (Corynebacterium jeikeium (strain K411)).